A 458-amino-acid chain; its full sequence is MQVLGMEEKPARRSVVLVPFPAQGHISPMMQLAKTLHLKGFSITVVQTKFNYFSPSDDFTHDFQFVTIPESLPESDFKNLGPIQFLFKLNKECKVSFKDCLGQLVLQQSNEISCVIYDEFMYFAEAAAKECKLPNIIFSTTSATAFACRSVFDKLYANNVQAPLKETKGQQEELVPEFYPLRYKDFPVSRFASLESIMEVYRNTVDKRTASSVIINTASCLESSSLSFLQQQQLQIPVYPIGPLHMVASAPTSLLEENKSCIEWLNKQKVNSVIYISMGSIALMEINEIMEVASGLAASNQHFLWVIRPGSIPGSEWIESMPEEFSKMVLDRGYIVKWAPQKEVLSHPAVGGFWSHCGWNSTLESIGQGVPMICRPFSGDQKVNARYLECVWKIGIQVEGELDRGVVERAVKRLMVDEEGEEMRKRAFSLKEQLRASVKSGGSSHNSLEEFVHFIRTL.

The Proton acceptor role is filled by His-25. His-25 is an an anthocyanidin binding site. Asp-118 (charge relay) is an active-site residue. Positions 140, 339, 341, 356, 359, 360, 361, and 364 each coordinate UDP-alpha-D-glucose. Residue Gly-379 participates in an anthocyanidin binding. Residues Asp-380 and Gln-381 each contribute to the UDP-alpha-D-glucose site.

Belongs to the UDP-glycosyltransferase family.

The enzyme catalyses a flavonol + UDP-alpha-D-glucose = a flavonol 3-O-beta-D-glucoside + UDP + H(+). It catalyses the reaction a 7-O-hydroxy-flavonol + UDP-alpha-D-glucose = a flavonol 7-O-beta-D-glucoside + UDP + H(+). In terms of biological role, possesses quercetin 3-O-glucosyltransferase and 7-O-glucosyltransferase activities in vitro. In Arabidopsis thaliana (Mouse-ear cress), this protein is Flavonol 3-O-glucosyltransferase UGT76E12.